The primary structure comprises 1715 residues: Pentafunctional AROM polypeptide (1715 aa).

The segment covering 1-17 has biased composition (polar residues); the sequence is MTSTASAQQPVLRTKTP. Positions 1 to 26 are disordered; the sequence is MTSTASAQQPVLRTKTPSYHAPPSTD. The interval 1 to 421 is 3-dehydroquinate synthase; sequence MTSTASAQQP…VQNMASTVSD (421 aa). NAD(+) contacts are provided by residues 71–73, 112–115, 143–145, and D148; these read DQN, EASK, and GGV. R159 contributes to the 7-phospho-2-dehydro-3-deoxy-D-arabino-heptonate binding site. 168–169 is a binding site for NAD(+); that stretch reads TT. D175 and K181 together coordinate 7-phospho-2-dehydro-3-deoxy-D-arabino-heptonate. K190 contributes to the NAD(+) binding site. N191 is a binding site for 7-phospho-2-dehydro-3-deoxy-D-arabino-heptonate. NAD(+) contacts are provided by residues 208 to 211 and N219; that span reads WLKT. E223 lines the Zn(2+) pocket. Residues 223–226 and K287 each bind 7-phospho-2-dehydro-3-deoxy-D-arabino-heptonate; that span reads EVVK. The active-site Proton acceptor; for 3-dehydroquinate synthase activity is the E297. 7-phospho-2-dehydro-3-deoxy-D-arabino-heptonate is bound by residues 301–305 and H308; that span reads RNLVN. H308 is a Zn(2+) binding site. The Proton acceptor; for 3-dehydroquinate synthase activity role is filled by H312. 7-phospho-2-dehydro-3-deoxy-D-arabino-heptonate is bound by residues H324 and K393. Residue H324 coordinates Zn(2+). An EPSP synthase region spans residues 434–895; sequence VTPIHEQPNK…WDDLERKLGI (462 aa). C877 functions as the For EPSP synthase activity in the catalytic mechanism. Positions 948–1165 are shikimate kinase; that stretch reads HATIICIGMR…KGGRRTYFLS (218 aa). 955 to 962 is a binding site for ATP; that stretch reads GMRASGKT. Positions 1166-1389 are 3-dehydroquinase; that stretch reads LTFPDVVPKL…AAPGQLSFRQ (224 aa). The active-site Proton acceptor; for 3-dehydroquinate dehydratase activity is the H1292. Catalysis depends on K1320, which acts as the Schiff-base intermediate with substrate; for 3-dehydroquinate dehydratase activity. The tract at residues 1402–1715 is shikimate dehydrogenase; the sequence is ARRFALFGSP…AAWDVYLQRC (314 aa).

This sequence in the N-terminal section; belongs to the sugar phosphate cyclases superfamily. Dehydroquinate synthase family. In the 2nd section; belongs to the EPSP synthase family. It in the 3rd section; belongs to the shikimate kinase family. The protein in the 4th section; belongs to the type-I 3-dehydroquinase family. This sequence in the C-terminal section; belongs to the shikimate dehydrogenase family. In terms of assembly, homodimer. Zn(2+) is required as a cofactor.

The protein resides in the cytoplasm. The enzyme catalyses 7-phospho-2-dehydro-3-deoxy-D-arabino-heptonate = 3-dehydroquinate + phosphate. The catalysed reaction is 3-dehydroquinate = 3-dehydroshikimate + H2O. It catalyses the reaction shikimate + NADP(+) = 3-dehydroshikimate + NADPH + H(+). It carries out the reaction shikimate + ATP = 3-phosphoshikimate + ADP + H(+). The enzyme catalyses 3-phosphoshikimate + phosphoenolpyruvate = 5-O-(1-carboxyvinyl)-3-phosphoshikimate + phosphate. Its pathway is metabolic intermediate biosynthesis; chorismate biosynthesis; chorismate from D-erythrose 4-phosphate and phosphoenolpyruvate: step 2/7. The protein operates within metabolic intermediate biosynthesis; chorismate biosynthesis; chorismate from D-erythrose 4-phosphate and phosphoenolpyruvate: step 3/7. It functions in the pathway metabolic intermediate biosynthesis; chorismate biosynthesis; chorismate from D-erythrose 4-phosphate and phosphoenolpyruvate: step 4/7. It participates in metabolic intermediate biosynthesis; chorismate biosynthesis; chorismate from D-erythrose 4-phosphate and phosphoenolpyruvate: step 5/7. Its pathway is metabolic intermediate biosynthesis; chorismate biosynthesis; chorismate from D-erythrose 4-phosphate and phosphoenolpyruvate: step 6/7. The AROM polypeptide catalyzes 5 consecutive enzymatic reactions in prechorismate polyaromatic amino acid biosynthesis. This Mycosarcoma maydis (Corn smut fungus) protein is Pentafunctional AROM polypeptide.